Consider the following 976-residue polypeptide: MALFRDIVLLGFLFCLSLVATVTSEEGATLLEIKKSFKDVNNVLYDWTTSPSSDYCVWRGVSCENVTFNVVALNLSDLNLDGEISPAIGDLKSLLSIDLRGNRLSGQIPDEIGDCSSLQNLDLSFNELSGDIPFSISKLKQLEQLILKNNQLIGPIPSTLSQIPNLKILDLAQNKLSGEIPRLIYWNEVLQYLGLRGNNLVGNISPDLCQLTGLWYFDVRNNSLTGSIPETIGNCTAFQVLDLSYNQLTGEIPFDIGFLQVATLSLQGNQLSGKIPSVIGLMQALAVLDLSGNLLSGSIPPILGNLTFTEKLYLHSNKLTGSIPPELGNMSKLHYLELNDNHLTGHIPPELGKLTDLFDLNVANNDLEGPIPDHLSSCTNLNSLNVHGNKFSGTIPRAFQKLESMTYLNLSSNNIKGPIPVELSRIGNLDTLDLSNNKINGIIPSSLGDLEHLLKMNLSRNHITGVVPGDFGNLRSIMEIDLSNNDISGPIPEELNQLQNIILLRLENNNLTGNVGSLANCLSLTVLNVSHNNLVGDIPKNNNFSRFSPDSFIGNPGLCGSWLNSPCHDSRRTVRVSISRAAILGIAIGGLVILLMVLIAACRPHNPPPFLDGSLDKPVTYSTPKLVILHMNMALHVYEDIMRMTENLSEKYIIGHGASSTVYKCVLKNCKPVAIKRLYSHNPQSMKQFETELEMLSSIKHRNLVSLQAYSLSHLGSLLFYDYLENGSLWDLLHGPTKKKTLDWDTRLKIAYGAAQGLAYLHHDCSPRIIHRDVKSSNILLDKDLEARLTDFGIAKSLCVSKSHTSTYVMGTIGYIDPEYARTSRLTEKSDVYSYGIVLLELLTRRKAVDDESNLHHLIMSKTGNNEVMEMADPDITSTCKDLGVVKKVFQLALLCTKRQPNDRPTMHQVTRVLGSFMLSEQPPAATDTSATLAGSCYVDEYANLKTPHSVNCSSMSASDAQLFLRFGQVISQNSE.

The N-terminal stretch at 1 to 24 (MALFRDIVLLGFLFCLSLVATVTS) is a signal peptide. The Extracellular portion of the chain corresponds to 25–580 (EEGATLLEIK…RRTVRVSISR (556 aa)). Asparagine 65 and asparagine 74 each carry an N-linked (GlcNAc...) asparagine glycan. 20 LRR repeats span residues 69 to 92 (NVVA…GDLK), 93 to 115 (SLLS…IGDC), 117 to 140 (SLQN…SKLK), 141 to 163 (QLEQ…LSQI), 165 to 187 (NLKI…IYWN), 189 to 212 (VLQY…CQLT), 213 to 235 (GLWY…IGNC), 237 to 259 (AFQV…IGFL), 260 to 282 (QVAT…IGLM), 284 to 306 (ALAV…LGNL), 308 to 330 (FTEK…LGNM), 332 to 355 (KLHY…GKLT), 356 to 379 (DLFD…SSCT), 380 to 401 (NLNS…AFQK), 404 to 425 (SMTY…ELSR), 428 to 449 (NLDT…SLGD), 452 to 473 (HLLK…DFGN), 476 to 498 (SIME…LNQL), 500 to 522 (NIIL…ANCL), and 523 to 545 (SLTV…NNFS). Asparagine 221 and asparagine 234 each carry an N-linked (GlcNAc...) asparagine glycan. N-linked (GlcNAc...) asparagine glycosylation is found at asparagine 305 and asparagine 329. Asparagine 409 carries an N-linked (GlcNAc...) asparagine glycan. The N-linked (GlcNAc...) asparagine glycan is linked to asparagine 457. Residues asparagine 510, asparagine 528, and asparagine 543 are each glycosylated (N-linked (GlcNAc...) asparagine). A helical membrane pass occupies residues 581-601 (AAILGIAIGGLVILLMVLIAA). The Cytoplasmic portion of the chain corresponds to 602-976 (CRPHNPPPFL…FGQVISQNSE (375 aa)). The residue at position 645 (threonine 645) is a Phosphothreonine. Residues 648–918 (LSEKYIIGHG…QVTRVLGSFM (271 aa)) form the Protein kinase domain. Residues 654–662 (IGHGASSTV) and lysine 676 each bind ATP. Residues tyrosine 721 and tyrosine 760 each carry the phosphotyrosine modification. The active-site Proton acceptor is aspartate 773. A Phosphotyrosine modification is found at tyrosine 815. Position 823 is a phosphothreonine (threonine 823).

The protein belongs to the protein kinase superfamily. Ser/Thr protein kinase family. In terms of assembly, homodimer and heterodimer with ERL1 and TMM. Interacts with EPF1, EPF2, EPFL4, EPFL5 and EPFL6. Interacts with SERK1, SERK2, SERK3/BAK1 and SERK4 in a EPF2-induced manner. Interacts with EPFL9/STOMAGEN. Mostly expressed in shoot apical meristems (SAM), organ primordia, flowers, siliques and young rosette leaves, and, to a lower extent, in stems and cauline leaves. Expressed in growing inflorescence stems and pedicels. Detected in epidermis, phloem and xylem.

The protein resides in the cell membrane. The enzyme catalyses L-seryl-[protein] + ATP = O-phospho-L-seryl-[protein] + ADP + H(+). It catalyses the reaction L-threonyl-[protein] + ATP = O-phospho-L-threonyl-[protein] + ADP + H(+). Its function is as follows. Receptor kinase that, together with ERL1 and ERL2, regulates aerial architecture, including inflorescence (e.g. shoot apical meristem-originating organ shape, elongation of the internode and pedicels, and adaxial-abaxial polarity), and stomatal patterning (e.g. density and clustering), probably by tuning cell division and expansion. Redundantly involved with ERL1 in procambial development regulation. Forms a functional ligand-receptor pair with EPF2 (AC Q8LC53). Modulates plant transpiration efficiency by controlling stomatal density, leaf photosynthetic capacity, epidermal cell expansion, mesophyll cell proliferation and cell-cell contact. A phloem-specific expression of ER is sufficient for proper inflorescence architecture. Probable major trait regulating canalization (maintenance of phenotype despite varying environment) in many aspect of the plant physiology (e.g. plant morphology, light-dependent leaves number, branch number, flowering time, phytate and mineral concentrations) by transducing microenvironmental variation into phenotypic differentiation (ecological amplifier). May maintain development integrity in heat stress conditions. Regulates cell wall composition and structure. Confers resistance to the pathogenic bacteria Ralstonia solanacearum and to the necrotrophic fungi Plectosphaerella cucumerina and Pythium irregulare, and required for callose deposition upon infection. Resistance to P.cucumerina seems cell wall-mediated. Forms a constitutive complex with TMM involved in the recognition of the stomatal regulatory peptides EPF1, EPF2 and EPFL9/STOMAGEN. The sequence is that of LRR receptor-like serine/threonine-protein kinase ERECTA from Arabidopsis thaliana (Mouse-ear cress).